The following is a 535-amino-acid chain: KNR4/SMI1 homolog (535 aa).

Positions 354-363 (ERKLPEEPKR) are enriched in basic and acidic residues. Residues 354–535 (ERKLPEEPKR…LKDDFENVAL (182 aa)) are disordered. Composition is skewed to polar residues over residues 364 to 384 (TVSS…QETA), 397 to 407 (TSLSVDNTGTK), and 456 to 469 (ESTN…TSQE). Positions 474–483 (TSEKPEEKPK) are enriched in basic and acidic residues. Over residues 484-494 (KQSKKASKKKG) the composition is skewed to basic residues. 2 stretches are compositionally biased toward basic and acidic residues: residues 495–509 (KKDE…TKEP) and 524–535 (EKLKDDFENVAL).

This sequence belongs to the KNR4/SMI1 family.

The sequence is that of KNR4/SMI1 homolog from Kluyveromyces lactis (strain ATCC 8585 / CBS 2359 / DSM 70799 / NBRC 1267 / NRRL Y-1140 / WM37) (Yeast).